Reading from the N-terminus, the 60-residue chain is Protein translocase subunit SecE (60 aa).

The helical transmembrane segment at 31 to 51 (IIVVSTVIFFLVFFYALDIGI) threads the bilayer.

Belongs to the SecE/SEC61-gamma family. In terms of assembly, component of the Sec protein translocase complex. Heterotrimer consisting of SecY, SecE and SecG subunits. The heterotrimers can form oligomers, although 1 heterotrimer is thought to be able to translocate proteins. Interacts with the ribosome. Interacts with SecDF, and other proteins may be involved. Interacts with SecA.

It localises to the cell membrane. Its function is as follows. Essential subunit of the Sec protein translocation channel SecYEG. Clamps together the 2 halves of SecY. May contact the channel plug during translocation. The polypeptide is Protein translocase subunit SecE (Staphylococcus epidermidis (strain ATCC 35984 / DSM 28319 / BCRC 17069 / CCUG 31568 / BM 3577 / RP62A)).